The sequence spans 64 residues: Large ribosomal subunit protein bL35 (64 aa).

This sequence belongs to the bacterial ribosomal protein bL35 family.

The chain is Large ribosomal subunit protein bL35 from Shewanella loihica (strain ATCC BAA-1088 / PV-4).